The primary structure comprises 293 residues: Small ribosomal subunit biogenesis GTPase RsgA (293 aa).

The CP-type G domain maps to 63-223; it reads KNELVRPPIA…VADTPGFSSL (161 aa). GTP contacts are provided by residues 112-115 and 166-174; these read SKMD and GQSGVGKSS. Cys-247, Cys-252, His-254, and Cys-260 together coordinate Zn(2+).

It belongs to the TRAFAC class YlqF/YawG GTPase family. RsgA subfamily. In terms of assembly, monomer. Associates with 30S ribosomal subunit, binds 16S rRNA. It depends on Zn(2+) as a cofactor.

The protein localises to the cytoplasm. Functionally, one of several proteins that assist in the late maturation steps of the functional core of the 30S ribosomal subunit. Helps release RbfA from mature subunits. May play a role in the assembly of ribosomal proteins into the subunit. Circularly permuted GTPase that catalyzes slow GTP hydrolysis, GTPase activity is stimulated by the 30S ribosomal subunit. This Bacillus cytotoxicus (strain DSM 22905 / CIP 110041 / 391-98 / NVH 391-98) protein is Small ribosomal subunit biogenesis GTPase RsgA.